We begin with the raw amino-acid sequence, 699 residues long: DNA ligase (699 aa).

NAD(+) is bound by residues 47-51 (DAQYD), 96-97 (SL), and glutamate 128. Residue lysine 130 is the N6-AMP-lysine intermediate of the active site. NAD(+) contacts are provided by arginine 151, glutamate 186, lysine 303, and lysine 327. Positions 422, 425, 440, and 446 each coordinate Zn(2+). The BRCT domain maps to 620 to 699 (GDNLLLSNQT…EEWIKMVNEL (80 aa)).

It belongs to the NAD-dependent DNA ligase family. LigA subfamily. Mg(2+) is required as a cofactor. Requires Mn(2+) as cofactor.

It catalyses the reaction NAD(+) + (deoxyribonucleotide)n-3'-hydroxyl + 5'-phospho-(deoxyribonucleotide)m = (deoxyribonucleotide)n+m + AMP + beta-nicotinamide D-nucleotide.. Its function is as follows. DNA ligase that catalyzes the formation of phosphodiester linkages between 5'-phosphoryl and 3'-hydroxyl groups in double-stranded DNA using NAD as a coenzyme and as the energy source for the reaction. It is essential for DNA replication and repair of damaged DNA. This Orientia tsutsugamushi (strain Ikeda) (Rickettsia tsutsugamushi) protein is DNA ligase.